The following is a 326-amino-acid chain: 4-hydroxythreonine-4-phosphate dehydrogenase (326 aa).

Residues His-132 and Thr-133 each coordinate substrate. The a divalent metal cation site is built by His-162, His-207, and His-262. Substrate-binding residues include Lys-270, Asn-279, and Arg-288.

The protein belongs to the PdxA family. Homodimer. Zn(2+) serves as cofactor. The cofactor is Mg(2+). It depends on Co(2+) as a cofactor.

The protein localises to the cytoplasm. The enzyme catalyses 4-(phosphooxy)-L-threonine + NAD(+) = 3-amino-2-oxopropyl phosphate + CO2 + NADH. It functions in the pathway cofactor biosynthesis; pyridoxine 5'-phosphate biosynthesis; pyridoxine 5'-phosphate from D-erythrose 4-phosphate: step 4/5. In terms of biological role, catalyzes the NAD(P)-dependent oxidation of 4-(phosphooxy)-L-threonine (HTP) into 2-amino-3-oxo-4-(phosphooxy)butyric acid which spontaneously decarboxylates to form 3-amino-2-oxopropyl phosphate (AHAP). This is 4-hydroxythreonine-4-phosphate dehydrogenase from Ruegeria sp. (strain TM1040) (Silicibacter sp.).